Here is a 4061-residue protein sequence, read N- to C-terminus: Hybrid PKS-NRPS synthetase tasS (4061 aa).

The 466-residue stretch at 7-472 (QEPIAVIGMA…GTNAHAIIEG (466 aa)) folds into the Ketosynthase family 3 (KS3) domain. C180 is an active-site residue. Residues 586–911 (VFTGQGAQWP…RQKNDVEELL (326 aa)) form a malonyl-CoA:ACP transacylase (MAT) domain region. An N-terminal hotdog fold region spans residues 977-1113 (HPLLGRRCVE…ATVNVTFHEP (137 aa)). The segment at 977–1280 (HPLLGRRCVE…VRVQPFSVAG (304 aa)) is dehydratase (DH) domain. Positions 977–1282 (HPLLGRRCVE…VQPFSVAGPQ (306 aa)) constitute a PKS/mFAS DH domain. Catalysis depends on H1010, which acts as the Proton acceptor; for dehydratase activity. The interval 1128–1282 (LANAEPQRLY…VQPFSVAGPQ (155 aa)) is C-terminal hotdog fold. Residue D1188 is the Proton donor; for dehydratase activity of the active site. The methyltransferase (MT) domain stretch occupies residues 1425 to 1619 (LDRFYEEGFE…GFNGVETHTP (195 aa)). Positions 2153 to 2325 (TYFLLGLSGE…GVVGSDMAIG (173 aa)) are ketoreductase (KR) domain. A Carrier 1 domain is found at 2437 to 2516 (EAIKVVFDTF…LLVEEAVDKL (80 aa)). Residue S2475 is modified to O-(pantetheine 4'-phosphoryl)serine. Positions 2527 to 2617 (EHGGEPDLTQ…QKHQEQTSQS (91 aa)) are disordered. Residues 2556 to 2576 (TSAASSSDTGSDSSPTSNSVS) show a composition bias toward low complexity. A compositionally biased stretch (polar residues) spans 2577–2592 (ETQTGTPLETPMSTTE). The tract at residues 2632-3077 (QMTFGQNRFW…ELATWDTESE (446 aa)) is condensation (C) domain. Residues 3103–3510 (QVIADHPDAV…RGYLTVEGRI (408 aa)) are adenylation (A) (KR) domain. The Carrier 2 domain occupies 3633–3712 (QNLTATERTL…SMAALLDDGV (80 aa)). An O-(pantetheine 4'-phosphoryl)serine modification is found at S3672. The segment at 3813 to 3969 (DIDVVLHCAA…LSPLEDAVEA (157 aa)) is reductase (RED) domain.

The protein in the C-terminal section; belongs to the NRP synthetase family.

The enzyme catalyses (2S,4S)-4-hydroxy-4-methylglutamate + 8 malonyl-CoA + 3 S-adenosyl-L-methionine + ATP + 8 NADPH + 11 H(+) = (2S)-3-[(2S)-3,5-dioxo-4-[(2E,4R,6R,8E,10E,12E)-4,6,12-trimethyltetradeca-2,8,10,12-tetraenoyl]pyrrolidin-2-yl]-2-hydroxy-2-methylpropanoate + AMP + 3 S-adenosyl-L-homocysteine + 8 CO2 + diphosphate + 8 NADP(+) + 8 CoA + 6 H2O. The protein operates within secondary metabolite biosynthesis. Its function is as follows. Hybrid PKS-NRPS synthetase; part of the gene cluster that mediates the biosynthesis of the tetramic acids Sch210971 and Sch210972, potential anti-HIV fungal natural product that contain a decalin core. The PKS module of tasS together with the enoylreductase tasC catalyze the formation of the polyketide unit which is then conjugated to 4-hydroxyl-4-methyl glutamate (HMG) by the condensation domain of the tasS NRPS module. One unique structural feature of Sch210971 and Sch210972 is the tetramic acid motif proposed to be derived from the non-proteinogenic amino acid HMG, by a Dieckmann-type condensation catalyzed by the reductase domain of tasS. The aldolase tasA catalyzes the aldol condensation of 2 molecules of pyruvic acid to yield the intermediate 4-hydroxyl-4-methyl-2-oxoglutarate (HMOG), which can then be stereoselectively transaminated, may be by tasG, to form HMG. The Diels-Alderase tas3 then uses the Dieckmann product of tasS as substrate and catalyzes the Diels-Alder cycloaddition to form the decalin ring of Sch210971 and Sch210972. This Hapsidospora irregularis protein is Hybrid PKS-NRPS synthetase tasS.